The following is a 122-amino-acid chain: Large ribosomal subunit protein uL18 (122 aa).

The interval 1–26 (MSNLSRKQQTQKRHRRLRRHLKGTAQ) is disordered. Basic residues predominate over residues 9 to 22 (QTQKRHRRLRRHLK).

The protein belongs to the universal ribosomal protein uL18 family. As to quaternary structure, part of the 50S ribosomal subunit; part of the 5S rRNA/L5/L18/L25 subcomplex. Contacts the 5S and 23S rRNAs.

Functionally, this is one of the proteins that bind and probably mediate the attachment of the 5S RNA into the large ribosomal subunit, where it forms part of the central protuberance. The protein is Large ribosomal subunit protein uL18 of Prochlorococcus marinus (strain MIT 9313).